The following is a 468-amino-acid chain: Glutamate--tRNA ligase 2 (468 aa).

The short motif at 11 to 21 (PSPTGFLHIGG) is the 'HIGH' region element. Residues 239–243 (KLSKR) carry the 'KMSKS' region motif. Lys242 contributes to the ATP binding site.

This sequence belongs to the class-I aminoacyl-tRNA synthetase family. Glutamate--tRNA ligase type 1 subfamily. As to quaternary structure, monomer.

The protein localises to the cytoplasm. It carries out the reaction tRNA(Glu) + L-glutamate + ATP = L-glutamyl-tRNA(Glu) + AMP + diphosphate. Its function is as follows. Catalyzes the attachment of glutamate to tRNA(Glu) in a two-step reaction: glutamate is first activated by ATP to form Glu-AMP and then transferred to the acceptor end of tRNA(Glu). This Ruegeria pomeroyi (strain ATCC 700808 / DSM 15171 / DSS-3) (Silicibacter pomeroyi) protein is Glutamate--tRNA ligase 2.